Here is a 474-residue protein sequence, read N- to C-terminus: Cysteine--tRNA ligase (474 aa).

Zn(2+) is bound at residue Cys27. Positions 29–39 (ITPYDHMHVGH) match the 'HIGH' region motif. Zn(2+) is bound by residues Cys213, His238, and Glu242. The 'KMSKS' region motif lies at 271 to 275 (KMSKS). ATP is bound at residue Lys274.

The protein belongs to the class-I aminoacyl-tRNA synthetase family. Zn(2+) serves as cofactor.

The protein localises to the cytoplasm. The catalysed reaction is tRNA(Cys) + L-cysteine + ATP = L-cysteinyl-tRNA(Cys) + AMP + diphosphate. This chain is Cysteine--tRNA ligase, found in Pyrobaculum neutrophilum (strain DSM 2338 / JCM 9278 / NBRC 100436 / V24Sta) (Thermoproteus neutrophilus).